The following is a 643-amino-acid chain: MIEIFIEDLNQKFTFNEGITLKDILKNLNGKFKDVVGGKLNGEIIDIHTPINQSGNLKFLKKEDKESLEILRHSLAHIMAQALKEIYGDENVHLGIGPTTEHGFYYDVEIEGKSLTDEDLPQIEEKMKEIIKKGYQIERFELPREEAIKFFENKKEIYKIDIIKHNIPEGEPISLYKQGDFVDLCRGPHLPSTDKAGAFKLISVSGAYWRGKETNPMLQRIYGVAFWSEKELKDYLNMLEEAKKRDHRKIGKDLELFLIDEEIGGGLAIWLPKGAIIRKEIEDAWKKEHLKRGYQLVYTPHVGKEQLWQTSGHLSFYQENMYPRMQIEEEGYYVKPMNCPFHVEIYKSKQRSYKEFPIRLAELGTVYRYERSGALHGLMRVRGFTQDDAHIICREDQVEDEIREVLNLALNTLKSYGFDEFEVYLSTKPEKYVGDDKMWEVAENSLRKAIESTGLDYKIDDGGGAFYGPKIDVKIKDAIGRLWQCSTIQFDFNLPERFDMYYIGEDNQKHRPYMIHRAIFGSIERFIGVLLEHYAGFLPVWLSPVQVKIIPIADKHLEYAETVKQKLLENDIRVELDDRNERMNKKIRDAELQKIPFMLVVGDKEAETGTVAVREKGKQGSQTLSIDEFVSKIKEIISNKHVL.

In terms of domain architecture, TGS spans 1–61 (MIEIFIEDLN…NQSGNLKFLK (61 aa)). Residues 246 to 539 (DHRKIGKDLE…LLEHYAGFLP (294 aa)) form a catalytic region. Zn(2+) contacts are provided by cysteine 339, histidine 390, and histidine 516.

This sequence belongs to the class-II aminoacyl-tRNA synthetase family. As to quaternary structure, homodimer. Zn(2+) serves as cofactor.

It localises to the cytoplasm. The enzyme catalyses tRNA(Thr) + L-threonine + ATP = L-threonyl-tRNA(Thr) + AMP + diphosphate + H(+). Its function is as follows. Catalyzes the attachment of threonine to tRNA(Thr) in a two-step reaction: L-threonine is first activated by ATP to form Thr-AMP and then transferred to the acceptor end of tRNA(Thr). Also edits incorrectly charged L-seryl-tRNA(Thr). The protein is Threonine--tRNA ligase of Sulfurihydrogenibium sp. (strain YO3AOP1).